The chain runs to 491 residues: Glutamyl-tRNA(Gln) amidotransferase subunit A (491 aa).

Catalysis depends on charge relay system residues Lys-79 and Ser-154. The active-site Acyl-ester intermediate is Ser-178.

The protein belongs to the amidase family. GatA subfamily. Heterotrimer of A, B and C subunits.

The enzyme catalyses L-glutamyl-tRNA(Gln) + L-glutamine + ATP + H2O = L-glutaminyl-tRNA(Gln) + L-glutamate + ADP + phosphate + H(+). Its function is as follows. Allows the formation of correctly charged Gln-tRNA(Gln) through the transamidation of misacylated Glu-tRNA(Gln) in organisms which lack glutaminyl-tRNA synthetase. The reaction takes place in the presence of glutamine and ATP through an activated gamma-phospho-Glu-tRNA(Gln). The sequence is that of Glutamyl-tRNA(Gln) amidotransferase subunit A from Natranaerobius thermophilus (strain ATCC BAA-1301 / DSM 18059 / JW/NM-WN-LF).